The chain runs to 300 residues: Acetylglutamate kinase (300 aa).

Substrate contacts are provided by residues 68–69 (GG), Arg-90, and Asn-195.

This sequence belongs to the acetylglutamate kinase family. ArgB subfamily.

It localises to the cytoplasm. The catalysed reaction is N-acetyl-L-glutamate + ATP = N-acetyl-L-glutamyl 5-phosphate + ADP. It participates in amino-acid biosynthesis; L-arginine biosynthesis; N(2)-acetyl-L-ornithine from L-glutamate: step 2/4. Its function is as follows. Catalyzes the ATP-dependent phosphorylation of N-acetyl-L-glutamate. The protein is Acetylglutamate kinase of Stutzerimonas stutzeri (strain A1501) (Pseudomonas stutzeri).